We begin with the raw amino-acid sequence, 326 residues long: Flap endonuclease 1 (326 aa).

The tract at residues 1–98 (MGVQFGDFIP…KTRKVRREMK (98 aa)) is N-domain. Mg(2+) contacts are provided by D27, D80, E152, E154, D173, D175, and D224. An I-domain region spans residues 116 to 245 (EAAKYAKRVS…KRAYELVRSG (130 aa)). The segment at 317-325 (KQKTLDAWF) is interaction with PCNA.

It belongs to the XPG/RAD2 endonuclease family. FEN1 subfamily. Interacts with PCNA. PCNA stimulates the nuclease activity without altering cleavage specificity. Mg(2+) is required as a cofactor.

Its function is as follows. Structure-specific nuclease with 5'-flap endonuclease and 5'-3' exonuclease activities involved in DNA replication and repair. During DNA replication, cleaves the 5'-overhanging flap structure that is generated by displacement synthesis when DNA polymerase encounters the 5'-end of a downstream Okazaki fragment. Binds the unpaired 3'-DNA end and kinks the DNA to facilitate 5' cleavage specificity. Cleaves one nucleotide into the double-stranded DNA from the junction in flap DNA, leaving a nick for ligation. Also involved in the base excision repair (BER) pathway. Acts as a genome stabilization factor that prevents flaps from equilibrating into structures that lead to duplications and deletions. Also possesses 5'-3' exonuclease activity on nicked or gapped double-stranded DNA. The protein is Flap endonuclease 1 of Methanocaldococcus jannaschii (strain ATCC 43067 / DSM 2661 / JAL-1 / JCM 10045 / NBRC 100440) (Methanococcus jannaschii).